The following is a 442-amino-acid chain: MKLKERLAELIPQWRAEVAEIRKKYGNRKTMDCTIGHAYGGMRGLKALVCDTSEVFPDEGVKFRGYTIPELREGPHKLPTAEGGFEPLPEGLWYLLLTGELPTEEDVKEISAEFTKRMQNVPQYVFDVLRAMPVDTHPMTMFAAGILAMQRESVFAKRYEEGMRREEHWEAMLEDSLNMLAALPVIAAYIYRRKYKGDTHIAPDPNLDWSANLAHMMGFDDFEVYELFRLYMFLHSDHEGGNVSAHTNLLVNSAYSDIYRSFSAAMNGLAGPLHGLANQEVLRWIQMLYKKFGGVPTKEQLERFAWDTLNSGQVIPGYGHAVLRVTDPRYVAQRDFALKHLPDDELFKIVSLCYEVIPEVLKKHGKAKNPWPNVDAHSGVLLWHYGIREYDFYTVLFGVSRALGCTAQAILVRGYMLPIERPKSITTRWVKEVAESLPVAGS.

Catalysis depends on residues histidine 274, histidine 320, and aspartate 375.

Belongs to the citrate synthase family.

The enzyme catalyses oxaloacetate + acetyl-CoA + H2O = citrate + CoA + H(+). The protein operates within carbohydrate metabolism; tricarboxylic acid cycle; isocitrate from oxaloacetate: step 1/2. In terms of biological role, catalyzes both citrate generation and citrate cleavage. Part of a reversible tricarboxylic acid (TCA) cycle that can fix carbon dioxide autotrophically and may represent an ancestral mode of the conventional reductive TCA (rTCA) cycle. The direction is controlled by the available carbon source(s). This Thermosulfidibacter takaii (strain DSM 17441 / JCM 13301 / NBRC 103674 / ABI70S6) protein is Citrate synthase.